A 280-amino-acid polypeptide reads, in one-letter code: Diaminopimelate epimerase (280 aa).

Positions 13 and 64 each coordinate substrate. Cys-73 functions as the Proton donor in the catalytic mechanism. Substrate contacts are provided by residues 74–75 (GN), Asn-164, Asn-197, and 215–216 (ER). Cys-224 acts as the Proton acceptor in catalysis. 225 to 226 (GT) contributes to the substrate binding site.

The protein belongs to the diaminopimelate epimerase family. In terms of assembly, homodimer.

It localises to the cytoplasm. It catalyses the reaction (2S,6S)-2,6-diaminopimelate = meso-2,6-diaminopimelate. It functions in the pathway amino-acid biosynthesis; L-lysine biosynthesis via DAP pathway; DL-2,6-diaminopimelate from LL-2,6-diaminopimelate: step 1/1. Catalyzes the stereoinversion of LL-2,6-diaminopimelate (L,L-DAP) to meso-diaminopimelate (meso-DAP), a precursor of L-lysine and an essential component of the bacterial peptidoglycan. In Leptospira biflexa serovar Patoc (strain Patoc 1 / Ames), this protein is Diaminopimelate epimerase.